A 230-amino-acid chain; its full sequence is Large ribosomal subunit protein uL1 (230 aa).

It belongs to the universal ribosomal protein uL1 family. As to quaternary structure, part of the 50S ribosomal subunit.

Its function is as follows. Binds directly to 23S rRNA. The L1 stalk is quite mobile in the ribosome, and is involved in E site tRNA release. Functionally, protein L1 is also a translational repressor protein, it controls the translation of the L11 operon by binding to its mRNA. In Lactobacillus gasseri (strain ATCC 33323 / DSM 20243 / BCRC 14619 / CIP 102991 / JCM 1131 / KCTC 3163 / NCIMB 11718 / NCTC 13722 / AM63), this protein is Large ribosomal subunit protein uL1.